Consider the following 1102-residue polypeptide: Putative helicase/primase complex protein (1102 aa).

Disordered regions lie at residues 1031 to 1057 (TKEEISSTKEETYSTKEETYSTKEETC) and 1082 to 1102 (EETCSIKEETSSIKEETFTET).

Belongs to the asfivirus F1055L family.

Its function is as follows. May be involved in DNA replication. The sequence is that of Putative helicase/primase complex protein from African swine fever virus (isolate Tick/Malawi/Lil 20-1/1983) (ASFV).